Reading from the N-terminus, the 303-residue chain is Aspartate carbamoyltransferase catalytic subunit (303 aa).

Residues R51 and T52 each coordinate carbamoyl phosphate. K80 contacts L-aspartate. Carbamoyl phosphate contacts are provided by R101, H129, and Q132. R162 and R221 together coordinate L-aspartate. Residues L260 and P261 each coordinate carbamoyl phosphate.

This sequence belongs to the aspartate/ornithine carbamoyltransferase superfamily. ATCase family. In terms of assembly, heterooligomer of catalytic and regulatory chains.

It catalyses the reaction carbamoyl phosphate + L-aspartate = N-carbamoyl-L-aspartate + phosphate + H(+). Its pathway is pyrimidine metabolism; UMP biosynthesis via de novo pathway; (S)-dihydroorotate from bicarbonate: step 2/3. Catalyzes the condensation of carbamoyl phosphate and aspartate to form carbamoyl aspartate and inorganic phosphate, the committed step in the de novo pyrimidine nucleotide biosynthesis pathway. The chain is Aspartate carbamoyltransferase catalytic subunit from Saccharolobus islandicus (strain M.14.25 / Kamchatka #1) (Sulfolobus islandicus).